The following is a 321-amino-acid chain: Beta-ketoacyl-[acyl-carrier-protein] synthase III (321 aa).

Residues C115 and H248 contribute to the active site. The segment at 249-253 is ACP-binding; it reads QANIR. The active site involves N278.

The protein belongs to the thiolase-like superfamily. FabH family. In terms of assembly, homodimer.

The protein localises to the cytoplasm. The enzyme catalyses malonyl-[ACP] + acetyl-CoA + H(+) = 3-oxobutanoyl-[ACP] + CO2 + CoA. It participates in lipid metabolism; fatty acid biosynthesis. Functionally, catalyzes the condensation reaction of fatty acid synthesis by the addition to an acyl acceptor of two carbons from malonyl-ACP. Catalyzes the first condensation reaction which initiates fatty acid synthesis and may therefore play a role in governing the total rate of fatty acid production. Possesses both acetoacetyl-ACP synthase and acetyl transacylase activities. Its substrate specificity determines the biosynthesis of branched-chain and/or straight-chain of fatty acids. The polypeptide is Beta-ketoacyl-[acyl-carrier-protein] synthase III (Aromatoleum aromaticum (strain DSM 19018 / LMG 30748 / EbN1) (Azoarcus sp. (strain EbN1))).